The sequence spans 425 residues: Histidine--tRNA ligase 1 (425 aa).

This sequence belongs to the class-II aminoacyl-tRNA synthetase family. Homodimer.

The protein resides in the cytoplasm. The catalysed reaction is tRNA(His) + L-histidine + ATP = L-histidyl-tRNA(His) + AMP + diphosphate + H(+). In Bacillus thuringiensis subsp. konkukian (strain 97-27), this protein is Histidine--tRNA ligase 1.